The chain runs to 704 residues: Elongation factor G (704 aa).

The tr-type G domain occupies Glu8–Asn290. Residues Ala17–Thr24, Asp88–His92, and Asn142–Asp145 contribute to the GTP site.

Belongs to the TRAFAC class translation factor GTPase superfamily. Classic translation factor GTPase family. EF-G/EF-2 subfamily.

It localises to the cytoplasm. Catalyzes the GTP-dependent ribosomal translocation step during translation elongation. During this step, the ribosome changes from the pre-translocational (PRE) to the post-translocational (POST) state as the newly formed A-site-bound peptidyl-tRNA and P-site-bound deacylated tRNA move to the P and E sites, respectively. Catalyzes the coordinated movement of the two tRNA molecules, the mRNA and conformational changes in the ribosome. This is Elongation factor G from Francisella tularensis subsp. holarctica (strain LVS).